The chain runs to 129 residues: MKSVLFVCVGNGGKSQMAAALAQKYASDSVEIHSAGTKPAQGLNQLSVESIAEVGADMSQGIPKAIDPELLRTVDRVVILGDDAQVDMPESAQGALERWSIEEPDAQGMERMRIVRDQIDNRVQALLAG.

The protein belongs to the low molecular weight phosphotyrosine protein phosphatase family.

The protein localises to the cytoplasm. It carries out the reaction mycothiol + arsenate = arseno-mycothiol + H2O. Its function is as follows. Involved in defense against toxic arsenate. Involved in the mycothiol/myoredoxin redox pathway which uses a mycothioltransferase mechanism; facilitates adduct formation between arsenate and mycothiol. This is Arsenate-mycothiol transferase ArsC2 (arsC2) from Corynebacterium glutamicum (strain ATCC 13032 / K051).